Reading from the N-terminus, the 221-residue chain is PKHD-type hydroxylase P9303_20491 (221 aa).

Residues 80-174 (HIHGVMFSRS…RLVCVGWIQS (95 aa)) form the Fe2OG dioxygenase domain. Residues His-98, Asp-100, and His-155 each contribute to the Fe cation site. Arg-165 is a binding site for 2-oxoglutarate.

Requires Fe(2+) as cofactor. The cofactor is L-ascorbate.

This is PKHD-type hydroxylase P9303_20491 from Prochlorococcus marinus (strain MIT 9303).